Consider the following 226-residue polypeptide: Ras-related protein RGP1 (226 aa).

Residue 25–32 participates in GTP binding; sequence GDSAVGKS. Residues 47–55 carry the Effector region motif; it reads SKATIGVEF. GTP-binding positions include 73 to 77 and 131 to 134; these read DTAGQ and NKSD. 2 S-geranylgeranyl cysteine lipidation sites follow: Cys-223 and Cys-224.

Belongs to the small GTPase superfamily. Rab family.

The protein resides in the cell membrane. Its function is as follows. May play an important role in plant growth and development. The polypeptide is Ras-related protein RGP1 (RGP1) (Oryza sativa subsp. japonica (Rice)).